The sequence spans 424 residues: Tyrosine--tRNA ligase (424 aa).

Y37 lines the L-tyrosine pocket. Residues 42–51 (PTADSLHLGH) carry the 'HIGH' region motif. The L-tyrosine site is built by Y175 and Q179. The 'KMSKS' region signature appears at 235-239 (KFGKT). Position 238 (K238) interacts with ATP. An S4 RNA-binding domain is found at 357 to 414 (AELQKALVSAQLAPSRSQARTLIQSSSISVNGKKQLKPEYIFTSEDRLLDRYTLLRRG).

Belongs to the class-I aminoacyl-tRNA synthetase family. TyrS type 1 subfamily. As to quaternary structure, homodimer.

The protein resides in the cytoplasm. The enzyme catalyses tRNA(Tyr) + L-tyrosine + ATP = L-tyrosyl-tRNA(Tyr) + AMP + diphosphate + H(+). Catalyzes the attachment of tyrosine to tRNA(Tyr) in a two-step reaction: tyrosine is first activated by ATP to form Tyr-AMP and then transferred to the acceptor end of tRNA(Tyr). This chain is Tyrosine--tRNA ligase, found in Hamiltonella defensa subsp. Acyrthosiphon pisum (strain 5AT).